Reading from the N-terminus, the 163-residue chain is Cytochrome b6-f complex subunit 4 (163 aa).

Helical transmembrane passes span 36–56 (LLYI…GLAV), 95–115 (LLGV…PFLE), and 131–151 (TVFL…TLPI).

It belongs to the cytochrome b family. PetD subfamily. As to quaternary structure, the 4 large subunits of the cytochrome b6-f complex are cytochrome b6, subunit IV (17 kDa polypeptide, petD), cytochrome f and the Rieske protein, while the 4 small subunits are petG, petL, petM and petN. The complex functions as a dimer.

It localises to the plastid. It is found in the chloroplast thylakoid membrane. Component of the cytochrome b6-f complex, which mediates electron transfer between photosystem II (PSII) and photosystem I (PSI), cyclic electron flow around PSI, and state transitions. In Phalaenopsis aphrodite subsp. formosana (Moth orchid), this protein is Cytochrome b6-f complex subunit 4.